A 450-amino-acid chain; its full sequence is Sulfide:quinone oxidoreductase, mitochondrial (450 aa).

Residues 53-54 (AG), glutamate 75, glutamine 83, and valine 118 contribute to the FAD site. Residues lysine 134 and lysine 173 each carry the N6-acetyllysine modification. The active-site Cysteine persulfide intermediate is the cysteine 201. Cysteine 201 and cysteine 379 form a disulfide bridge. An FAD-binding site is contributed by aspartate 336. Serine 343 carries the phosphoserine modification. FAD is bound at residue 344-347 (KTAA). Cysteine 379 acts as the Cysteine persulfide intermediate in catalysis.

Belongs to the SQRD family. The cofactor is FAD.

It localises to the mitochondrion. The enzyme catalyses ubiquinone-10 + hydrogen sulfide + sulfite + 2 H(+) = ubiquinol-10 + thiosulfate. The catalysed reaction is a quinone + hydrogen sulfide + glutathione + H(+) = S-sulfanylglutathione + a quinol. It carries out the reaction ubiquinone-10 + hydrogen sulfide + glutathione + H(+) = S-sulfanylglutathione + ubiquinol-10. Its function is as follows. Catalyzes the oxidation of hydrogen sulfide with the help of a quinone, such as ubiquinone-10, giving rise to thiosulfate and ultimately to sulfane (molecular sulfur) atoms. Requires an additional electron acceptor; can use sulfite, sulfide or cyanide (in vitro). It is believed the in vivo electron acceptor is glutathione. The sequence is that of Sulfide:quinone oxidoreductase, mitochondrial from Mus musculus (Mouse).